A 200-amino-acid chain; its full sequence is uncharacterized protein (200 aa).

Positions 1-19 are cleaved as a signal peptide; it reads MNAMFHSLFALSFVSLVAS. The chain crosses the membrane as a helical span at residues 148–168; sequence FMVIVSLAAFCISVLAGLALQ.

The protein localises to the membrane. This is an uncharacterized protein from Caenorhabditis elegans.